A 151-amino-acid chain; its full sequence is 3-hydroxyacyl-[acyl-carrier-protein] dehydratase FabZ (151 aa).

The active site involves His-54.

This sequence belongs to the thioester dehydratase family. FabZ subfamily.

It localises to the cytoplasm. It carries out the reaction a (3R)-hydroxyacyl-[ACP] = a (2E)-enoyl-[ACP] + H2O. In terms of biological role, involved in unsaturated fatty acids biosynthesis. Catalyzes the dehydration of short chain beta-hydroxyacyl-ACPs and long chain saturated and unsaturated beta-hydroxyacyl-ACPs. In Erwinia tasmaniensis (strain DSM 17950 / CFBP 7177 / CIP 109463 / NCPPB 4357 / Et1/99), this protein is 3-hydroxyacyl-[acyl-carrier-protein] dehydratase FabZ.